A 481-amino-acid polypeptide reads, in one-letter code: Arylsulfatase (481 aa).

Residues aspartate 11, glutamine 12, and cysteine 51 each coordinate Ca(2+). The active-site Nucleophile is the cysteine 51. Position 51 is a 3-oxoalanine (Cys) (cysteine 51). Histidine 102 is an active-site residue. Ca(2+) contacts are provided by aspartate 302 and histidine 303.

This sequence belongs to the sulfatase family. The cofactor is Ca(2+). The conversion to 3-oxoalanine (also known as C-formylglycine, FGly), of a serine or cysteine residue in prokaryotes and of a cysteine residue in eukaryotes, is critical for catalytic activity.

The enzyme catalyses an aryl sulfate + H2O = a phenol + sulfate + H(+). Has sulfatase activity toward para-nitrophenyl sulfate, which is increased in presence of calcium ion. In Clostridium perfringens (strain 13 / Type A), this protein is Arylsulfatase.